The following is a 404-amino-acid chain: Pre-heme d1 synthase (404 aa).

The 214-residue stretch at 22-235 folds into the Radical SAM core domain; sequence GTPKPVVIWN…LIARALESAE (214 aa). Residues Cys-36, Cys-40, Cys-43, Cys-340, Cys-343, Cys-349, and Cys-371 each coordinate [4Fe-4S] cluster.

The protein belongs to the radical SAM superfamily. [4Fe-4S] cluster serves as cofactor.

It functions in the pathway porphyrin-containing compound metabolism. Functionally, involved in heme d1 biosynthesis. Radical SAM enzyme that catalyzes the removal of two propionate side chains from the intermediate 12,18-didecarboxysiroheme (DDSH) and may introduce the keto functions on rings A and B, yielding the heme d1 precursor dihydro-heme d1. This chain is Pre-heme d1 synthase, found in Dinoroseobacter shibae (strain DSM 16493 / NCIMB 14021 / DFL 12).